The sequence spans 441 residues: MERVLRQLSTGSYGGRRCGGIEERIERWSRTTNSGTNTAGGWIPPPASFLMSNTVLRVHGSDPGFFIHVKHVNTVTNRQHMVRTVRVMPHKTIQSNVVKRATAKFVTDKKRISNVFGVKSTRIEFTTREHRSANYTANCKPLVQPTYKSYFNLIMQSHGECTIGTHRDVINNLNYTTYLYGVCNPMSTMVDSMKQKNFLTPFFFSSINLAGPIETTNQLFISMTINTQKLTHETIYDLGKTLYPIYSLLEVDTKFNWFCNMIALFLECFINTPNKIGMIWMNERYYLENPTENATRSTETWNEYRKYMLEKCAPLLNGFSMAFAQRTGQFVYKNCEMVHIAPFFVAAALEEAVLSYGSFLLNTRKIKSFKELVMMLSVTPTDPRLTVTQTDDRTDVYRTGDRVLTWSHGADFKVGASERLVLGKKINQYIKCKTGDHGDQD.

This is an uncharacterized protein from Ictalurid herpesvirus 1 (strain Auburn) (IcHV-1).